We begin with the raw amino-acid sequence, 463 residues long: uncharacterized protein (463 aa).

11 consecutive transmembrane segments (helical) span residues 6-26 (ILPV…FMLL), 31-51 (TFIS…SLSA), 60-80 (FIYA…IVSM), 101-123 (VRGP…LFFW), 130-152 (LIGA…AAMA), 189-209 (ASIP…FIMI), 242-262 (SILA…MLLF), 269-289 (ATAL…FFVY), 304-324 (GFKF…FFYL), 413-433 (AIWV…AAIC), and 443-463 (KNFI…VMML).

The protein resides in the cell membrane. This is an uncharacterized protein from Bacillus subtilis (strain 168).